The following is a 228-amino-acid chain: uncharacterized protein (228 aa).

ATP is bound at residue 21–28; it reads GMIALGKT.

This is an uncharacterized protein from Mycoplasma genitalium (strain ATCC 33530 / DSM 19775 / NCTC 10195 / G37) (Mycoplasmoides genitalium).